The sequence spans 389 residues: 5-amino-6-(D-ribitylamino)uracil--L-tyrosine 4-hydroxyphenyl transferase (389 aa).

One can recognise a Radical SAM core domain in the interval 56–298; it reads VSYVINRNIN…QAVARLFFGR (243 aa). [4Fe-4S] cluster contacts are provided by cysteine 70, cysteine 74, and cysteine 77.

The protein belongs to the radical SAM superfamily. CofH family. In terms of assembly, consists of two subunits, CofG and CofH. The cofactor is [4Fe-4S] cluster.

The enzyme catalyses 5-amino-6-(D-ribitylamino)uracil + L-tyrosine + S-adenosyl-L-methionine = 5-amino-5-(4-hydroxybenzyl)-6-(D-ribitylimino)-5,6-dihydrouracil + 2-iminoacetate + 5'-deoxyadenosine + L-methionine + H(+). The protein operates within cofactor biosynthesis; coenzyme F0 biosynthesis. In terms of biological role, catalyzes the radical-mediated synthesis of 5-amino-5-(4-hydroxybenzyl)-6-(D-ribitylimino)-5,6-dihydrouracil from 5-amino-6-(D-ribitylamino)uracil and L-tyrosine. The sequence is that of 5-amino-6-(D-ribitylamino)uracil--L-tyrosine 4-hydroxyphenyl transferase from Gloeobacter violaceus (strain ATCC 29082 / PCC 7421).